The sequence spans 91 residues: Large ribosomal subunit protein bL27 (91 aa).

It belongs to the bacterial ribosomal protein bL27 family.

This chain is Large ribosomal subunit protein bL27, found in Pseudomonas savastanoi pv. phaseolicola (strain 1448A / Race 6) (Pseudomonas syringae pv. phaseolicola (strain 1448A / Race 6)).